We begin with the raw amino-acid sequence, 263 residues long: 3'-5' ssDNA/RNA exonuclease TatD (263 aa).

A divalent metal cation-binding residues include E92, H128, and H153.

Belongs to the metallo-dependent hydrolases superfamily. TatD-type hydrolase family. TatD subfamily. In terms of assembly, monomer. The cofactor is Mg(2+).

It is found in the cytoplasm. 3'-5' exonuclease that prefers single-stranded DNA and RNA. May play a role in the H(2)O(2)-induced DNA damage repair. The protein is 3'-5' ssDNA/RNA exonuclease TatD of Rahnella sp. (strain Y9602).